The primary structure comprises 330 residues: Ketol-acid reductoisomerase (NADP(+)) (330 aa).

Residues 1–182 (MAVVYYDQDA…GATRAGVIET (182 aa)) form the KARI N-terminal Rossmann domain. Residues 25–28 (YGSQ), R48, S51, S53, and 83–86 (DETQ) each bind NADP(+). H108 is an active-site residue. G134 contacts NADP(+). The KARI C-terminal knotted domain occupies 183–328 (TFKEETETDL…DQLREMMSWL (146 aa)). Residues D191, E195, E227, and E231 each contribute to the Mg(2+) site. S252 lines the substrate pocket.

The protein belongs to the ketol-acid reductoisomerase family. It depends on Mg(2+) as a cofactor.

It catalyses the reaction (2R)-2,3-dihydroxy-3-methylbutanoate + NADP(+) = (2S)-2-acetolactate + NADPH + H(+). The catalysed reaction is (2R,3R)-2,3-dihydroxy-3-methylpentanoate + NADP(+) = (S)-2-ethyl-2-hydroxy-3-oxobutanoate + NADPH + H(+). The protein operates within amino-acid biosynthesis; L-isoleucine biosynthesis; L-isoleucine from 2-oxobutanoate: step 2/4. It functions in the pathway amino-acid biosynthesis; L-valine biosynthesis; L-valine from pyruvate: step 2/4. Functionally, involved in the biosynthesis of branched-chain amino acids (BCAA). Catalyzes an alkyl-migration followed by a ketol-acid reduction of (S)-2-acetolactate (S2AL) to yield (R)-2,3-dihydroxy-isovalerate. In the isomerase reaction, S2AL is rearranged via a Mg-dependent methyl migration to produce 3-hydroxy-3-methyl-2-ketobutyrate (HMKB). In the reductase reaction, this 2-ketoacid undergoes a metal-dependent reduction by NADPH to yield (R)-2,3-dihydroxy-isovalerate. The polypeptide is Ketol-acid reductoisomerase (NADP(+)) (Moorella thermoacetica (strain ATCC 39073 / JCM 9320)).